Consider the following 291-residue polypeptide: m-AAA protease-interacting protein 1, mitochondrial (291 aa).

The transit peptide at 1–96 (MALAARLLPL…SLPASPIRSY (96 aa)) directs the protein to the mitochondrion.

In terms of assembly, interacts with AFG3L2. Interacts with SPG7. Interacts with SMDT1/EMRE (via the N-terminal transit peptide); interaction is direct and takes place before maturation of SMDT1/EMRE.

Its subcellular location is the mitochondrion matrix. Functionally, promotes sorting of SMDT1/EMRE in mitochondria by ensuring its maturation. Interacts with the transit peptide region of SMDT1/EMRE precursor protein in the mitochondrial matrix, leading to protect it against protein degradation by YME1L1, thereby ensuring SMDT1/EMRE maturation by the mitochondrial processing peptidase (PMPCA and PMPCB). The sequence is that of m-AAA protease-interacting protein 1, mitochondrial from Rattus norvegicus (Rat).